Here is a 251-residue protein sequence, read N- to C-terminus: Cell division protein ZapD (251 aa).

It belongs to the ZapD family. In terms of assembly, interacts with FtsZ.

The protein resides in the cytoplasm. Cell division factor that enhances FtsZ-ring assembly. Directly interacts with FtsZ and promotes bundling of FtsZ protofilaments, with a reduction in FtsZ GTPase activity. This is Cell division protein ZapD from Burkholderia mallei (strain NCTC 10247).